The primary structure comprises 213 residues: Nicolin-1 (213 aa).

As to quaternary structure, part of the neuronal tubulin polyglutamylase complex which contains TPGS1, TPGS2, TTLL1, LRRC49 and NICN1. In terms of tissue distribution, high expression level is found in brain, testis, liver and kidney. Weak expression in spleen, leukocytes, small intestin and colon.

Its subcellular location is the nucleus. This chain is Nicolin-1 (Nicn1), found in Mus musculus (Mouse).